Consider the following 243-residue polypeptide: 4-hydroxy-tetrahydrodipicolinate reductase (243 aa).

NAD(+) is bound by residues Gly9 to Met14, Gly78 to Ser80, and Ala104 to Phe107. Residue His134 is the Proton donor/acceptor of the active site. Position 135 (His135) interacts with (S)-2,3,4,5-tetrahydrodipicolinate. Residue Lys138 is the Proton donor of the active site. Residue Gly144–Thr145 participates in (S)-2,3,4,5-tetrahydrodipicolinate binding.

Belongs to the DapB family.

The protein localises to the cytoplasm. The enzyme catalyses (S)-2,3,4,5-tetrahydrodipicolinate + NAD(+) + H2O = (2S,4S)-4-hydroxy-2,3,4,5-tetrahydrodipicolinate + NADH + H(+). It carries out the reaction (S)-2,3,4,5-tetrahydrodipicolinate + NADP(+) + H2O = (2S,4S)-4-hydroxy-2,3,4,5-tetrahydrodipicolinate + NADPH + H(+). It participates in amino-acid biosynthesis; L-lysine biosynthesis via DAP pathway; (S)-tetrahydrodipicolinate from L-aspartate: step 4/4. Functionally, catalyzes the conversion of 4-hydroxy-tetrahydrodipicolinate (HTPA) to tetrahydrodipicolinate. The sequence is that of 4-hydroxy-tetrahydrodipicolinate reductase from Legionella pneumophila (strain Lens).